The chain runs to 387 residues: Intraflagellar transport protein 57 (387 aa).

Belongs to the IFT57 family.

The protein resides in the cell projection. It is found in the cilium. The protein localises to the flagellum. Its subcellular location is the cytoplasm. It localises to the cytoskeleton. The protein resides in the flagellum axoneme. It is found in the flagellum basal body. Component of the intraflagellar transport complex B (IFT-B) involved in flagellar assembly. This is Intraflagellar transport protein 57 from Giardia intestinalis (strain ATCC 50803 / WB clone C6) (Giardia lamblia).